The primary structure comprises 169 residues: Menaquinol:cytochrome c reductase iron-sulfur subunit (169 aa).

Residues 62 to 160 (EPKRFDFKVK…FEVKDGKLYL (99 aa)) form the Rieske domain. Cys102, His104, Cys123, and His126 together coordinate [2Fe-2S] cluster. Cys107 and Cys125 are oxidised to a cystine.

It belongs to the Rieske iron-sulfur protein family. The main subunits of the menaquinol:cytochrome c complex are a Rieske-type iron-sulfur protein (QcrA), a cytochrome b (QcrB) and a cytochrome c (QcrC). [2Fe-2S] cluster serves as cofactor.

Component of the menaquinol:cytochrome c reductase complex. The Rieske protein is a high potential 2Fe-2S protein. In Geobacillus thermodenitrificans, this protein is Menaquinol:cytochrome c reductase iron-sulfur subunit (qcrA).